Consider the following 396-residue polypeptide: L-lactate dehydrogenase (396 aa).

The region spanning 1-380 is the FMN hydroxy acid dehydrogenase domain; the sequence is MIISAASDYR…SGDSLVQELG (380 aa). Position 24 (Tyr-24) interacts with substrate. Positions 106 and 127 each coordinate FMN. Tyr-129 contacts substrate. Thr-155 contacts FMN. Arg-164 lines the substrate pocket. Lys-251 lines the FMN pocket. The Proton acceptor role is filled by His-275. Residue Arg-278 participates in substrate binding. 306–330 contributes to the FMN binding site; it reads DSGIRNGLDVVRMIALGADTVLLGR.

Belongs to the FMN-dependent alpha-hydroxy acid dehydrogenase family. FMN serves as cofactor.

It localises to the cell inner membrane. It carries out the reaction (S)-lactate + A = pyruvate + AH2. Functionally, catalyzes the conversion of L-lactate to pyruvate. Is coupled to the respiratory chain. In Salmonella paratyphi C (strain RKS4594), this protein is L-lactate dehydrogenase.